The sequence spans 122 residues: Basic phospholipase A2 LmTX-II (122 aa).

6 disulfide bridges follow: cysteine 26/cysteine 115, cysteine 28/cysteine 44, cysteine 43/cysteine 95, cysteine 49/cysteine 122, cysteine 50/cysteine 88, and cysteine 75/cysteine 86. The Ca(2+) site is built by tyrosine 27, glycine 29, and glycine 31. Histidine 47 is a catalytic residue. Aspartate 48 provides a ligand contact to Ca(2+). The active site involves aspartate 89.

Monomer. It depends on Ca(2+) as a cofactor. In terms of tissue distribution, expressed by the venom gland.

The protein localises to the secreted. The catalysed reaction is a 1,2-diacyl-sn-glycero-3-phosphocholine + H2O = a 1-acyl-sn-glycero-3-phosphocholine + a fatty acid + H(+). In terms of biological role, snake venom phospholipase A2 (PLA2) that may display neurotoxic and myotoxic activities. May induce inflammatory edema by mechanisms involving mast cell activation and arachidonic acid metabolites. May increase plasma creatine kinase activity. PLA2 catalyzes the calcium-dependent hydrolysis of the 2-acyl groups in 3-sn-phosphoglycerides. The polypeptide is Basic phospholipase A2 LmTX-II (Lachesis muta muta (Bushmaster)).